Reading from the N-terminus, the 355-residue chain is Ribosomal RNA small subunit methyltransferase H (355 aa).

S-adenosyl-L-methionine is bound by residues 55 to 57 (GGH), aspartate 75, aspartate 122, and glutamine 129. The segment at 327–355 (ERTSQPLPATGAEDFVPAVPGAAEKGRRR) is disordered.

This sequence belongs to the methyltransferase superfamily. RsmH family.

It is found in the cytoplasm. It carries out the reaction cytidine(1402) in 16S rRNA + S-adenosyl-L-methionine = N(4)-methylcytidine(1402) in 16S rRNA + S-adenosyl-L-homocysteine + H(+). In terms of biological role, specifically methylates the N4 position of cytidine in position 1402 (C1402) of 16S rRNA. The protein is Ribosomal RNA small subunit methyltransferase H of Bordetella avium (strain 197N).